The following is a 472-amino-acid chain: Sulfate adenylyltransferase subunit 1 (472 aa).

Residues 22 to 239 (KELLRFLTCG…TVPIAGDKNY (218 aa)) form the tr-type G domain. The segment at 31–38 (GSVDDGKS) is G1. Residue 31–38 (GSVDDGKS) coordinates GTP. The tract at residues 89 to 93 (GITID) is G2. Residues 110–113 (DTPG) are G3. GTP contacts are provided by residues 110-114 (DTPGH) and 165-168 (NKMD). Positions 165–168 (NKMD) are G4. The interval 202–204 (SAL) is G5.

This sequence belongs to the TRAFAC class translation factor GTPase superfamily. Classic translation factor GTPase family. CysN/NodQ subfamily. Heterodimer composed of CysD, the smaller subunit, and CysN.

The enzyme catalyses sulfate + ATP + H(+) = adenosine 5'-phosphosulfate + diphosphate. Its pathway is sulfur metabolism; hydrogen sulfide biosynthesis; sulfite from sulfate: step 1/3. In terms of biological role, with CysD forms the ATP sulfurylase (ATPS) that catalyzes the adenylation of sulfate producing adenosine 5'-phosphosulfate (APS) and diphosphate, the first enzymatic step in sulfur assimilation pathway. APS synthesis involves the formation of a high-energy phosphoric-sulfuric acid anhydride bond driven by GTP hydrolysis by CysN coupled to ATP hydrolysis by CysD. The chain is Sulfate adenylyltransferase subunit 1 from Cellvibrio japonicus (strain Ueda107) (Pseudomonas fluorescens subsp. cellulosa).